Here is a 108-residue protein sequence, read N- to C-terminus: UPF0102 protein Sbal_4100 (108 aa).

This sequence belongs to the UPF0102 family.

The sequence is that of UPF0102 protein Sbal_4100 from Shewanella baltica (strain OS155 / ATCC BAA-1091).